A 749-amino-acid polypeptide reads, in one-letter code: MSTTIIGFPRLGEFRELKFTTEKYFRKEISEEELLAAAKDLRAKHWNIVKEKGITEIPSNDFSHYDNFLDAAFLFNVVPASVQNLDLSDLERYFALGRGYQGEKGDVRALPMKKWFNTNYHYIVPKFEKDTQVKLAGHKIFDEFQEAKELGLNTRPVLVGPFTFLQLSDFEEGVKADDFVDSLVAAYQEVFAKLAELGATRIQLDEAALVKDLTAEEKALFLNLYNKLLADKKGLEVLLQTYFGDVRDVYADLVNLPVDAIGLDFVEGKKTLELVKGGFPADKTLYVGIVNGKNIWRNNYEKSLAVLEQIPAENIVLTSSCSLLHVPFTTANEEFEPALLNHFAFAVEKLDEIRDLDAIRNGQGSEALAANKELFATERVGENAELRARIAGLTDVDYTRLPAFAEREAIQEEAFKLPALPTTTIGSFPQTKEVRAKRLAYRKGELSQKEYDAFLAETIDEWIKWQEDIDFDVLVHGEFERNDMVEYFGQNLSGYLFSKNGWVQSYGMRGVKPPIIWGDVTRLNPITVKWSSYAQSRTNKPVKGMLTGPVTILNWSFPREDISIKDSTLQIALAIKDEVLDLEAAGVKIIQIDEAALREKLPLRRSDWYEDYLDWAIPAFRLVHSTVASDTQIHTHMCYSEFTDIIPAIDNMDADVISFEASRSNLEILDELKAKNFQTEVGPGVYDIHSPRVPNEGEIDNTIEAILAKVPSKKVWINPDCGLKTRGIPETKESLIRLVEAAKAAREKL.

5-methyltetrahydropteroyltri-L-glutamate-binding positions include 15–18 (RELK) and Lys-114. Residues 425 to 427 (IGS) and Glu-478 contribute to the L-homocysteine site. L-methionine is bound by residues 425-427 (IGS) and Glu-478. Trp-555 provides a ligand contact to 5-methyltetrahydropteroyltri-L-glutamate. Asp-593 is an L-homocysteine binding site. Residue Asp-593 coordinates L-methionine. Glu-599 contributes to the 5-methyltetrahydropteroyltri-L-glutamate binding site. Residues His-636, Cys-638, and Glu-660 each coordinate Zn(2+). The active-site Proton donor is His-689. Cys-721 provides a ligand contact to Zn(2+).

It belongs to the vitamin-B12 independent methionine synthase family. Zn(2+) serves as cofactor.

It catalyses the reaction 5-methyltetrahydropteroyltri-L-glutamate + L-homocysteine = tetrahydropteroyltri-L-glutamate + L-methionine. Its pathway is amino-acid biosynthesis; L-methionine biosynthesis via de novo pathway; L-methionine from L-homocysteine (MetE route): step 1/1. In terms of biological role, catalyzes the transfer of a methyl group from 5-methyltetrahydrofolate to homocysteine resulting in methionine formation. This is 5-methyltetrahydropteroyltriglutamate--homocysteine methyltransferase from Streptococcus pneumoniae serotype 19F (strain G54).